The following is a 666-amino-acid chain: Endogenous retrovirus group K member 7 Gag polyprotein (666 aa).

Residue Gly2 is the site of N-myristoyl glycine attachment. 2 disordered regions span residues 165-205 (GKGP…NKTQ) and 217-264 (ELQY…GSEL). Positions 232-247 (GMPPAPQGRAPYPQPP) are enriched in pro residues. CCHC-type zinc fingers lie at residues 544-561 (GKCY…NCPV) and 580-597 (DLCP…QCRS). The tract at residues 598–641 (KFDKNGQPLSGNEQRGQPQAPQQTGAFPIQPFVPQGFQEQQPPL) is disordered. Over residues 604–622 (QPLSGNEQRGQPQAPQQTG) the composition is skewed to polar residues.

It belongs to the beta type-B retroviral Gag protein family. HERV class-II K(HML-2) gag subfamily. Post-translationally, specific enzymatic cleavages may yield mature proteins. Myristoylation is essential for retroviral assembly. Alteration of the glycine residue leads to a block in the budding of particles and an accumulation of Gag inside the cell.

It is found in the cell membrane. Its function is as follows. The products of the Gag polyproteins of infectious retroviruses perform highly complex orchestrated tasks during the assembly, budding, maturation, and infection stages of the viral replication cycle. During viral assembly, the proteins form membrane associations and self-associations that ultimately result in budding of an immature virion from the infected cell. Gag precursors also function during viral assembly to selectively bind and package two plus strands of genomic RNA. Endogenous Gag proteins may have kept, lost or modified their original function during evolution. This chain is Endogenous retrovirus group K member 7 Gag polyprotein (ERVK-7), found in Homo sapiens (Human).